The sequence spans 353 residues: Photosystem II protein D1 (353 aa).

Threonine 2 is subject to N-acetylthreonine. At threonine 2 the chain carries Phosphothreonine. 3 helical membrane passes run 29–46 (YIGW…TATS), 118–133 (HFLL…EWEL), and 142–156 (WIAV…AATA). Histidine 118 is a binding site for chlorophyll a. A pheophytin a-binding site is contributed by tyrosine 126. Aspartate 170 and glutamate 189 together coordinate [CaMn4O5] cluster. A helical transmembrane segment spans residues 197–218 (FHMLGVAGVFGGSLFSAMHGSL). Histidine 198 contacts chlorophyll a. A quinone is bound by residues histidine 215 and 264 to 265 (SF). Histidine 215 serves as a coordination point for Fe cation. Histidine 272 is a binding site for Fe cation. Residues 274-288 (FLAAWPVVGIWFTAL) form a helical membrane-spanning segment. 4 residues coordinate [CaMn4O5] cluster: histidine 332, glutamate 333, aspartate 342, and alanine 344. A propeptide spanning residues 345–353 (SVEAPSTNG) is cleaved from the precursor.

This sequence belongs to the reaction center PufL/M/PsbA/D family. PSII is composed of 1 copy each of membrane proteins PsbA, PsbB, PsbC, PsbD, PsbE, PsbF, PsbH, PsbI, PsbJ, PsbK, PsbL, PsbM, PsbT, PsbX, PsbY, PsbZ, Psb30/Ycf12, at least 3 peripheral proteins of the oxygen-evolving complex and a large number of cofactors. It forms dimeric complexes. The D1/D2 heterodimer binds P680, chlorophylls that are the primary electron donor of PSII, and subsequent electron acceptors. It shares a non-heme iron and each subunit binds pheophytin, quinone, additional chlorophylls, carotenoids and lipids. D1 provides most of the ligands for the Mn4-Ca-O5 cluster of the oxygen-evolving complex (OEC). There is also a Cl(-1) ion associated with D1 and D2, which is required for oxygen evolution. The PSII complex binds additional chlorophylls, carotenoids and specific lipids. serves as cofactor. In terms of processing, tyr-161 forms a radical intermediate that is referred to as redox-active TyrZ, YZ or Y-Z. Post-translationally, C-terminally processed by CTPA; processing is essential to allow assembly of the oxygen-evolving complex and thus photosynthetic growth.

Its subcellular location is the plastid. It localises to the chloroplast thylakoid membrane. The enzyme catalyses 2 a plastoquinone + 4 hnu + 2 H2O = 2 a plastoquinol + O2. Photosystem II (PSII) is a light-driven water:plastoquinone oxidoreductase that uses light energy to abstract electrons from H(2)O, generating O(2) and a proton gradient subsequently used for ATP formation. It consists of a core antenna complex that captures photons, and an electron transfer chain that converts photonic excitation into a charge separation. The D1/D2 (PsbA/PsbD) reaction center heterodimer binds P680, the primary electron donor of PSII as well as several subsequent electron acceptors. In Acorus calamus (Sweet flag), this protein is Photosystem II protein D1.